Consider the following 242-residue polypeptide: Large ribosomal subunit protein uL1 (242 aa).

This sequence belongs to the universal ribosomal protein uL1 family. In terms of assembly, part of the 50S ribosomal subunit.

Its function is as follows. Binds directly to 23S rRNA. The L1 stalk is quite mobile in the ribosome, and is involved in E site tRNA release. Protein L1 is also a translational repressor protein, it controls the translation of the L11 operon by binding to its mRNA. The protein is Large ribosomal subunit protein uL1 of Dictyoglomus thermophilum (strain ATCC 35947 / DSM 3960 / H-6-12).